Reading from the N-terminus, the 163-residue chain is Disulfide bond formation protein B 1 (163 aa).

Over 1–9 (MPLASPRQL) the chain is Cytoplasmic. Residues 10–26 (FLLAFLACVAIMGGALY) form a helical membrane-spanning segment. Residues 27-44 (LEHVVGLEACPLCVVQRI) lie on the Periplasmic side of the membrane. An intrachain disulfide couples C36 to C39. Residues 45 to 61 (FFILIGLTCLAGAIQGP) traverse the membrane as a helical segment. Residues 62–67 (GLRGRR) lie on the Cytoplasmic side of the membrane. A helical membrane pass occupies residues 68–85 (IYSVLVFLLALGGGATAA). Residues 86–142 (RQVWLQTVPLDQLPACLPSLDYMMQALPFQEVIRLVLHGTADCAQVSWTLFTLSIPE) are Periplasmic-facing. A disulfide bridge links C101 with C128. The helical transmembrane segment at 143-161 (WSLLAFVAYLGFSIVQFLR) threads the bilayer. Over 162-163 (RA) the chain is Cytoplasmic.

Belongs to the DsbB family.

The protein resides in the cell inner membrane. Its function is as follows. Required for disulfide bond formation in some periplasmic proteins. Acts by oxidizing the DsbA protein. This chain is Disulfide bond formation protein B 1 (dsbB1), found in Pseudomonas aeruginosa (strain ATCC 15692 / DSM 22644 / CIP 104116 / JCM 14847 / LMG 12228 / 1C / PRS 101 / PAO1).